The following is a 342-amino-acid chain: Protein-glutamate methylesterase/protein-glutamine glutaminase 3 (342 aa).

The Response regulatory domain maps to 3–120 (RVLVVEDMPT…SPGFADDARR (118 aa)). At D54 the chain carries 4-aspartylphosphate. A CheB-type methylesterase domain is found at 152-342 (DVPRGRVVAV…ADRLALWLRR (191 aa)). Active-site residues include S164, H191, and D285.

Belongs to the CheB family. Phosphorylated by CheA. Phosphorylation of the N-terminal regulatory domain activates the methylesterase activity.

Its subcellular location is the cytoplasm. It carries out the reaction [protein]-L-glutamate 5-O-methyl ester + H2O = L-glutamyl-[protein] + methanol + H(+). The enzyme catalyses L-glutaminyl-[protein] + H2O = L-glutamyl-[protein] + NH4(+). Involved in chemotaxis. Part of a chemotaxis signal transduction system that modulates chemotaxis in response to various stimuli. Catalyzes the demethylation of specific methylglutamate residues introduced into the chemoreceptors (methyl-accepting chemotaxis proteins or MCP) by CheR. Also mediates the irreversible deamidation of specific glutamine residues to glutamic acid. The protein is Protein-glutamate methylesterase/protein-glutamine glutaminase 3 of Anaeromyxobacter dehalogenans (strain 2CP-C).